Consider the following 286-residue polypeptide: MKQYLDFLKWVLEKGKHKENRTSVDTISAFGYQMRFDLSKGFPLVTTKKTNFSAIAHELLWFIKGDTNIKYLVDNKVNIWNQWPYESYKKSQDFQSESLKEFIQKIKDDNEFAQKHGNLGPVYGKQWRDFLGIDQLKKVIEQIKNNPNSRRLIVSSWNPSEIDTMLLPPCHTLFQFYVNDNKLSCHLYQRSADAFLGIPFNIASYALLTFLLAQETNLEVGDFVHSIGDAHIYVNHLEQVKTQLKRNPKELPKLIIKNKNIFEINFEDIELVDYEFDPIIKGEVAV.

Residue R21 participates in dUMP binding. Residue N51 participates in (6R)-5,10-methylene-5,6,7,8-tetrahydrofolate binding. 150–151 (RR) contributes to the dUMP binding site. C170 serves as the catalytic Nucleophile. Residues 190-193 (RSAD), N201, and 231-233 (HIY) contribute to the dUMP site. D193 contributes to the (6R)-5,10-methylene-5,6,7,8-tetrahydrofolate binding site. A285 is a binding site for (6R)-5,10-methylene-5,6,7,8-tetrahydrofolate.

It belongs to the thymidylate synthase family. Bacterial-type ThyA subfamily. Homodimer.

The protein localises to the cytoplasm. The enzyme catalyses dUMP + (6R)-5,10-methylene-5,6,7,8-tetrahydrofolate = 7,8-dihydrofolate + dTMP. Its pathway is pyrimidine metabolism; dTTP biosynthesis. In terms of biological role, catalyzes the reductive methylation of 2'-deoxyuridine-5'-monophosphate (dUMP) to 2'-deoxythymidine-5'-monophosphate (dTMP) while utilizing 5,10-methylenetetrahydrofolate (mTHF) as the methyl donor and reductant in the reaction, yielding dihydrofolate (DHF) as a by-product. This enzymatic reaction provides an intracellular de novo source of dTMP, an essential precursor for DNA biosynthesis. In Mycoplasmopsis pulmonis (strain UAB CTIP) (Mycoplasma pulmonis), this protein is Thymidylate synthase.